We begin with the raw amino-acid sequence, 571 residues long: Septation ring formation regulator EzrA (571 aa).

At 1–3 the chain is on the extracellular side; it reads MYY. A helical transmembrane segment spans residues 4-22; it reads MLIGFIIVVIAVIGAGYIL. Residues 23–571 lie on the Cytoplasmic side of the membrane; the sequence is KRKHYQRINE…ESKVSVDDIE (549 aa). Coiled-coil stretches lie at residues 248 to 298, 326 to 374, 400 to 437, and 478 to 529; these read LAQM…DTLE, DALA…ASGE, KFAEELRSLRKDELEARDDAERMRRAIITLDRKMERER, and RIAE…ENHF.

This sequence belongs to the EzrA family.

It localises to the cell membrane. Negative regulator of FtsZ ring formation; modulates the frequency and position of FtsZ ring formation. Inhibits FtsZ ring formation at polar sites. Interacts either with FtsZ or with one of its binding partners to promote depolymerization. In Listeria monocytogenes serovar 1/2a (strain ATCC BAA-679 / EGD-e), this protein is Septation ring formation regulator EzrA.